A 145-amino-acid chain; its full sequence is Large ribosomal subunit protein uL16 (145 aa).

Positions 76 to 95 (PKTKTPAETRMGKGKGEPEH) are enriched in basic and acidic residues. The interval 76 to 97 (PKTKTPAETRMGKGKGEPEHFV) is disordered.

Belongs to the universal ribosomal protein uL16 family. Part of the 50S ribosomal subunit.

Binds 23S rRNA and is also seen to make contacts with the A and possibly P site tRNAs. The chain is Large ribosomal subunit protein uL16 from Salinibacter ruber (strain DSM 13855 / M31).